Here is a 603-residue protein sequence, read N- to C-terminus: Nuclear receptor subfamily 2 group C member 1 (603 aa).

Residues 1-178 form a required for interaction with KAT2B region; that stretch reads MATIEEIAHQ…RLQRCIAFGM (178 aa). The nuclear receptor DNA-binding region spans 110-185; the sequence is FDLCVVCGDK…FGMKQDSVQC (76 aa). 2 NR C4-type zinc fingers span residues 113–133 and 149–173; these read CVVCGDKASGRHYGAVTCEGC and CRGSKDCIINKHHRNRCQYCRLQRC. 2 positions are modified to phosphoserine: Ser-197 and Ser-215. Residue Thr-220 is modified to Phosphothreonine. Thr-222 is modified (phosphothreonine; by MAPK1). A Glycyl lysine isopeptide (Lys-Gly) (interchain with G-Cter in SUMO2) cross-link involves residue Lys-250. An NR LBD domain is found at 348 to 590; sequence GSVHLITGDS…SVIPHILKME (243 aa). At Ser-581 the chain carries Phosphoserine; by PKC. Residues 584–603 are required for interaction with NRIP1; the sequence is PHILKMEPADYNSQIIGHSI. A Glycyl lysine isopeptide (Lys-Gly) (interchain with G-Cter in SUMO2) cross-link involves residue Lys-588.

The protein belongs to the nuclear hormone receptor family. NR2 subfamily. As to quaternary structure, homodimer. Heterodimer; binds DNA as a heterodimer with NR2C2 required for chromatin remodeling and for binding to promoter regions such as globin DR1 repeats. Interacts with NRIP1 (via its LXXLL motifs); the interaction provides corepressor activity. Interacts with HDAC3 (via the DNA-binding domain). Interacts with HDAC4 (via the DNA-binding domain). Interacts with PIAS1; the interaction is required for sumoylation of NR2C1. Interacts with UBE2I; the interaction is required for sumoylation of NR2C1. Interacts with KAT2B; the interaction acts as a corepressor of gene expression. Interacts with ESR1; the interaction prevents homodimerization of ESR1 and suppresses its transcriptional activity and cell growth. Post-translationally, sumoylation requires both PIAS1 and UBE2I. Sumoylation appears to dissociate NR2C1 from the PML nuclear bodies. Enhances the interaction with NRIP1 but inhibits interaction with KAT2B. In proliferating cells, stimulation by all-trans retinoic acid, activation of MAPK1-mediated phosphorylation and recruitment to PML bodies with subsequent sumoylation, suppresses OCT4 expression. Phosphorylated on several serine and threonine residues. Phosphorylation on Thr-222, stimulated by all-trans retinoic acid (atRA) mediates PML location and sumoylation in proliferating cells which then modulates its association with effector molecules, KAT2B and NRIP1. Phosphorylation on Ser-581 by PKC is important for protein stability and function as activator of RARB.

The protein localises to the nucleus. It localises to the PML body. Functionally, orphan nuclear receptor. Binds the IR7 element in the promoter of its own gene in an autoregulatory negative feedback mechanism. Primarily repressor of a broad range of genes. Binds to hormone response elements (HREs) consisting of two 5'-AGGTCA-3' half site direct repeat consensus sequences. Together with NR2C2, forms the core of the DRED (direct repeat erythroid-definitive) complex that represses embryonic and fetal globin transcription. Also activator of OCT4 gene expression. May be involved in stem cell proliferation and differentiation. Mediator of retinoic acid-regulated preadipocyte proliferation. The chain is Nuclear receptor subfamily 2 group C member 1 (NR2C1) from Homo sapiens (Human).